A 489-amino-acid polypeptide reads, in one-letter code: DBIRD complex subunit ZNF326 (489 aa).

4 disordered regions span residues 1–28 (MDREYGSYNQRSMDSYGNQSYSVDEMGD), 62–100 (EQGHFGDSYDGRYENPYRNSVDSFEGRSQGGSSWDPSFT), 133–181 (VGSR…RPGL), and 205–263 (PPFK…KNSE). Positions 7–22 (SYNQRSMDSYGNQSYS) are enriched in polar residues. A compositionally biased stretch (basic and acidic residues) spans 62–76 (EQGHFGDSYDGRYEN). Over residues 91–100 (GGSSWDPSFT) the composition is skewed to polar residues. Positions 200-221 (KRKMAPPFKPVGVFGKKQKLSK) match the Bipartite nuclear localization signal motif. C2H2 AKAP95-type zinc fingers lie at residues 273 to 295 (CSFCKFRSFDEKGIEEHLSSTTH) and 365 to 388 (CSACSVYVPALHSSVQLHLKSADH). A disordered region spans residues 431–489 (ETQPEEQQQEQEEEEEEEEQQEQAAVPEQDLSEEQPAAIAAEPEGEDFTCDPLTTTDEV). Residues 433-451 (QPEEQQQEQEEEEEEEEQQ) show a composition bias toward acidic residues.

The protein belongs to the AKAP95 family. In terms of assembly, component of the DBIRD complex.

The protein resides in the nucleus. Its function is as follows. Core component of the DBIRD complex, a multiprotein complex that acts at the interface between core mRNP particles and RNA polymerase II (RNAPII) and integrates transcript elongation with the regulation of alternative splicing. The protein is DBIRD complex subunit ZNF326 (znf326) of Xenopus tropicalis (Western clawed frog).